Reading from the N-terminus, the 446-residue chain is Transcriptional regulator STERILE APETALA (446 aa).

Residues 1-10 (MSTSSSSSDN) are compositionally biased toward low complexity. The disordered stretch occupies residues 1 to 32 (MSTSSSSSDNGAGGSGGVFEAPSPSRPRRGAN).

As to expression, expressed in inflorescence and floral meristems, young floral organ primordia, and later in ovule primordia.

The protein localises to the nucleus. In terms of biological role, transcriptional regulator involved in the specification of floral identity. Acts as A class cadastral protein by repressing the C class floral homeotic gene AGAMOUS in the external flower organs in association with APETALA2 and other repressors. Is required to maintain floral meristem identity in concert with AGAMOUS. Also interacts with APETALA2 to ensure the normal development of ovule. This chain is Transcriptional regulator STERILE APETALA (SAP), found in Arabidopsis thaliana (Mouse-ear cress).